A 171-amino-acid chain; its full sequence is MILAILALVIATFLYGGATTVQAGCRDTLTSLSPCLYYLNGGSSSPSWSCCRQFSTVVQSSPECLCSVVNSNESSFYGFKFNRTLALNLPTACNVQTPSPSLCNTGGNVPTTLPANTPVGSPRSAPSPSGTTSPANTPSGSKKFPLSNESSSKSNVIILSFVSIALVLAII.

The N-terminal stretch at 1–18 (MILAILALVIATFLYGGA) is a signal peptide. 4 disulfides stabilise this stretch: cysteine 25–cysteine 66, cysteine 35–cysteine 50, cysteine 51–cysteine 93, and cysteine 64–cysteine 103. N-linked (GlcNAc...) asparagine glycosylation is found at asparagine 72 and asparagine 82. The disordered stretch occupies residues 113–149 (LPANTPVGSPRSAPSPSGTTSPANTPSGSKKFPLSNE). Residues 118-141 (PVGSPRSAPSPSGTTSPANTPSGS) show a composition bias toward low complexity. The GPI-anchor amidated serine moiety is linked to residue serine 147. A glycan (N-linked (GlcNAc...) asparagine) is linked at asparagine 148. A propeptide spans 148–171 (NESSSKSNVIILSFVSIALVLAII) (removed in mature form).

Belongs to the plant LTP family.

It is found in the cell membrane. Functionally, probable lipid transfer protein. In Arabidopsis thaliana (Mouse-ear cress), this protein is Non-specific lipid transfer protein GPI-anchored 19.